Here is a 56-residue protein sequence, read N- to C-terminus: Large ribosomal subunit protein bL32 (56 aa).

The tract at residues 1 to 56 (MAVQQNRKTRSKRGMRRSHDALSAPTLSQDKETGTTHRRHHVAPDGFYRGRKVVDV) is disordered. The segment covering 7-16 (RKTRSKRGMR) has biased composition (basic residues).

Belongs to the bacterial ribosomal protein bL32 family.

The sequence is that of Large ribosomal subunit protein bL32 from Chromohalobacter salexigens (strain ATCC BAA-138 / DSM 3043 / CIP 106854 / NCIMB 13768 / 1H11).